We begin with the raw amino-acid sequence, 264 residues long: Apolipoprotein A-I (264 aa).

The N-terminal stretch at 1–18 (MKAVVLAVALVFLTGSQA) is a signal peptide. 2 consecutive repeat copies span residues 67-88 (LNLL…ERLG) and 89-110 (PLTR…QEMN). The segment at 67 to 264 (LNLLENWDTL…DKASETLTAQ (198 aa)) is 10 X approximate tandem repeats. Methionine 109 is subject to Methionine sulfoxide. Residues 111-121 (KDLEEVKQKVQ) form a 3; half-length repeat. Tandem repeats lie at residues 122 to 143 (PYLD…QKVA), 144 to 165 (PLGA…GRLS), and 166 to 187 (PVAE…TQLA). The 7; truncated repeat unit spans residues 188-207 (PHSEQMRESLAQRLAELKSN). Methionine 193 is subject to Methionine sulfoxide. Residues 208–229 (PTLNEYHTRAKTHLKTLGEKAR) form repeat 8. One copy of the 9; half-length repeat lies at 230–240 (PALEDLRHSLM). Methionine sulfoxide is present on residues methionine 240 and methionine 242. Repeat 10 spans residues 241–264 (PMLETLKTQVQSVIDKASETLTAQ).

The protein belongs to the apolipoprotein A1/A4/E family. As to quaternary structure, homodimer. Interacts with APOA1BP and CLU. Component of a sperm activating protein complex (SPAP), consisting of APOA1, an immunoglobulin heavy chain, an immunoglobulin light chain and albumin. Interacts with NDRG1. Interacts with SCGB3A2. Interacts with NAXE and YJEFN3. Post-translationally, glycosylated. In terms of processing, palmitoylated. May be acylated. Post-translationally, phosphorylation sites are present in the extracellular medium. In terms of tissue distribution, major protein of plasma HDL, also found in chylomicrons.

The protein localises to the secreted. Participates in the reverse transport of cholesterol from tissues to the liver for excretion by promoting cholesterol efflux from tissues and by acting as a cofactor for the lecithin cholesterol acyltransferase (LCAT). As part of the SPAP complex, activates spermatozoa motility. The protein is Apolipoprotein A-I (Apoa1) of Mus musculus (Mouse).